Reading from the N-terminus, the 605-residue chain is Probable Xaa-Pro aminopeptidase P (605 aa).

Mn(2+) is bound by residues Asp-402, Asp-413, Glu-511, and Glu-525.

It belongs to the peptidase M24B family. Requires Mn(2+) as cofactor.

It catalyses the reaction Release of any N-terminal amino acid, including proline, that is linked to proline, even from a dipeptide or tripeptide.. In terms of biological role, catalyzes the removal of a penultimate prolyl residue from the N-termini of peptides. The sequence is that of Probable Xaa-Pro aminopeptidase P (AMPP) from Leptosphaeria maculans (strain JN3 / isolate v23.1.3 / race Av1-4-5-6-7-8) (Blackleg fungus).